Here is a 367-residue protein sequence, read N- to C-terminus: tRNA (guanine(26)-N(2))-dimethyltransferase (367 aa).

A Trm1 methyltransferase domain is found at methionine 1–threonine 365. Arginine 34, arginine 64, aspartate 79, aspartate 105, and alanine 106 together coordinate S-adenosyl-L-methionine. Residues cysteine 234, cysteine 237, cysteine 254, and cysteine 257 each coordinate Zn(2+).

The protein belongs to the class I-like SAM-binding methyltransferase superfamily. Trm1 family.

The catalysed reaction is guanosine(26) in tRNA + 2 S-adenosyl-L-methionine = N(2)-dimethylguanosine(26) in tRNA + 2 S-adenosyl-L-homocysteine + 2 H(+). Its function is as follows. Dimethylates a single guanine residue at position 26 of a number of tRNAs using S-adenosyl-L-methionine as donor of the methyl groups. The chain is tRNA (guanine(26)-N(2))-dimethyltransferase from Haloarcula marismortui (strain ATCC 43049 / DSM 3752 / JCM 8966 / VKM B-1809) (Halobacterium marismortui).